A 73-amino-acid chain; its full sequence is Large ribosomal subunit protein bL31 (73 aa).

This sequence belongs to the bacterial ribosomal protein bL31 family. Type A subfamily. Part of the 50S ribosomal subunit.

Functionally, binds the 23S rRNA. In Allorhizobium ampelinum (strain ATCC BAA-846 / DSM 112012 / S4) (Agrobacterium vitis (strain S4)), this protein is Large ribosomal subunit protein bL31.